The primary structure comprises 126 residues: Large ribosomal subunit protein uL22 (126 aa).

Belongs to the universal ribosomal protein uL22 family. Part of the 50S ribosomal subunit.

This protein binds specifically to 23S rRNA; its binding is stimulated by other ribosomal proteins, e.g. L4, L17, and L20. It is important during the early stages of 50S assembly. It makes multiple contacts with different domains of the 23S rRNA in the assembled 50S subunit and ribosome. Its function is as follows. The globular domain of the protein is located near the polypeptide exit tunnel on the outside of the subunit, while an extended beta-hairpin is found that lines the wall of the exit tunnel in the center of the 70S ribosome. The sequence is that of Large ribosomal subunit protein uL22 from Cereibacter sphaeroides (strain ATCC 17029 / ATH 2.4.9) (Rhodobacter sphaeroides).